A 737-amino-acid chain; its full sequence is Propionyl-CoA carboxylase alpha chain, mitochondrial (737 aa).

The transit peptide at 1-61 directs the protein to the mitochondrion; sequence MAGLWVRTVA…QCLVVSRSLS (61 aa). The Biotin carboxylation domain occupies 71–518; that stretch reads TFDKILIANR…STKFLSDVYP (448 aa). Position 74 is an N6-acetyllysine; alternate (K74). At K74 the chain carries N6-succinyllysine; alternate. Position 128 is an N6-succinyllysine (K128). K159 bears the N6-acetyllysine; alternate mark. K159 is subject to N6-succinyllysine; alternate. K163 carries the N6-acetyllysine modification. ATP is bound at residue K186. The ATP-grasp domain occupies 190–387; that stretch reads KLLAKRAKVN…LVQEMILVAK (198 aa). K197 is modified (N6-succinyllysine). K209 is modified (N6-acetyllysine; alternate). K209 is subject to N6-succinyllysine; alternate. ATP-binding positions include 218 to 279, E270, and N305; that span reads AREI…PRHI. S261 carries the phosphoserine modification. Position 271 is an N6-succinyllysine (K271). Residue K337 is modified to N6-acetyllysine; alternate. K337 carries the N6-succinyllysine; alternate modification. Mg(2+) is bound by residues E345, E358, and N360. Mn(2+) contacts are provided by E345, E358, and N360. The active site involves R362. K394 and K416 each carry N6-succinyllysine. Biotin is bound at residue F418. N6-acetyllysine is present on K505. Residues K511, K522, K567, and K657 each carry the N6-succinyllysine modification. A Biotinyl-binding domain is found at 658 to 737; it reads FMLEKVPKDT…GEGDLLVELE (80 aa). An N6-biotinyllysine; by HLCS modification is found at K703.

In terms of assembly, the holoenzyme is a dodecamer composed of 6 PCCA/alpha subunits and 6 PCCB/beta subunits. Interacts (via the biotin carboxylation domain) with SIRT4. Interacts with SIRT3 and SIRT5. Biotin serves as cofactor. Mg(2+) is required as a cofactor. It depends on Mn(2+) as a cofactor. Post-translationally, acetylated. In terms of processing, the biotin cofactor is covalently attached to the C-terminal biotinyl-binding domain and is required for the catalytic activity. Biotinylation is catalyzed by HLCS.

It is found in the mitochondrion matrix. The catalysed reaction is propanoyl-CoA + hydrogencarbonate + ATP = (S)-methylmalonyl-CoA + ADP + phosphate + H(+). It carries out the reaction butanoyl-CoA + hydrogencarbonate + ATP = (2S)-ethylmalonyl-CoA + ADP + phosphate + H(+). It participates in metabolic intermediate metabolism; propanoyl-CoA degradation; succinyl-CoA from propanoyl-CoA: step 1/3. Functionally, this is one of the 2 subunits of the biotin-dependent propionyl-CoA carboxylase (PCC), a mitochondrial enzyme involved in the catabolism of odd chain fatty acids, branched-chain amino acids isoleucine, threonine, methionine, and valine and other metabolites. Propionyl-CoA carboxylase catalyzes the carboxylation of propionyl-CoA/propanoyl-CoA to D-methylmalonyl-CoA/(S)-methylmalonyl-CoA. Within the holoenzyme, the alpha subunit catalyzes the ATP-dependent carboxylation of the biotin carried by the biotin carboxyl carrier (BCC) domain, while the beta subunit then transfers the carboxyl group from carboxylated biotin to propionyl-CoA. Propionyl-CoA carboxylase also significantly acts on butyryl-CoA/butanoyl-CoA, which is converted to ethylmalonyl-CoA/(2S)-ethylmalonyl-CoA. Other alternative minor substrates include (2E)-butenoyl-CoA/crotonoyl-CoA. The sequence is that of Propionyl-CoA carboxylase alpha chain, mitochondrial from Rattus norvegicus (Rat).